The primary structure comprises 802 residues: MWIQVRTIDGSKTCTIEDVSRKATIEELRERVWALFDVRPECQRLFYRGKQLENGYTLFDYDVGLNDIIQLLVRPDPDHLPGTSTQIEAKPCSNSPPKVKKAPRVGPSNQPSTSARARLIDPGFGIYKVNELVDARDVGLGAWFEAHIHSVTRASDGQSRGKTPLKNGSSCKRTNGNIKHKSKENTNKLDSVPSTSNSDCVAADEDVIYHIQYDEYPESGTLEMNVKDLRPRARTILKWNELNVGDVVMVNYNVESPGQRGFWFDAEITTLKTISRTKKELRVKIFLGGSEGTLNDCKIISVDEIFKIERPGAHPLSFADGKFLRRNDPECDLCGGDPEKKCHSCSCRVCGGKHEPNMQLLCDECNVAYHIYCLNPPLDKVPEEEYWYCPSCKTDSSEVVKAGERLKMSKKKAKMPSASTESRRDWGRGMACVGRTRECTIVPSNHYGPIPGIPVGSTWRFRVQVSEAGVHRPHVGGIHGRSNDGAYSLVLAGGFADEVDRGDEFTYTGSGGKNLAGNKRIGAPSADQTLTNMNRALALNCDAPLDDKIGAESRNWRAGKPVRVIRSFKGRKISKYAPEEGNRYDGIYKVVKYWPEISSSHGFLVWRYLLRRDDVEPAPWTSEGIERSRRLCLRLQYPAGYPSDKEGKKPKGQSKKQPSGTTKRPISDDDCPSASKVYKASDSAEAIEAFQLTPQQQHLIREDCQNQKLWDEVLSHLVEGPNFLKKLEQSFMCVCCQELVYQPVTTECFHNVCKDCLQRSFKAQVFSCPACRHDLGQNYIMIPNEILQTLLDLFFPGYSKGR.

In terms of domain architecture, Ubiquitin-like spans 1-78 (MWIQVRTIDG…IQLLVRPDPD (78 aa)). Disordered regions lie at residues 80 to 116 (LPGT…TSAR) and 153 to 197 (RASD…STSN). Composition is skewed to polar residues over residues 82–96 (GTST…SNSP), 153–177 (RASD…TNGN), and 188–197 (KLDSVPSTSN). The required for interaction with histone H3 stretch occupies residues 117–311 (ARLIDPGFGI…VDEIFKIERP (195 aa)). Residues 194-288 (STSNSDCVAA…KELRVKIFLG (95 aa)) form an interaction with PCNP region. The PHD-type zinc-finger motif lies at 344 to 395 (SCSCRVCGGKHEPNMQLLCDECNVAYHIYCLNPPLDKVPEEEYWYCPSCKTD). Residues 414–644 (KMPSASTESR…LQYPAGYPSD (231 aa)) form a methyl-CpG binding and interaction with HDAC1 region. Residues 448–612 (GPIPGIPVGS…FLVWRYLLRR (165 aa)) form the YDG domain. Residues 640–674 (GYPSDKEGKKPKGQSKKQPSGTTKRPISDDDCPSA) are disordered. Serine 667 is subject to Phosphoserine. The segment at 733–772 (CVCCQELVYQPVTTECFHNVCKDCLQRSFKAQVFSCPACR) adopts an RING-type zinc-finger fold.

As to quaternary structure, homodimer; disulfide-linked. Binds methylated CpG containing oligonucleotides. Interacts with H3; the interaction has a preference for the 'Lys-9' trimethylated form of H3 (H3K9me3). Interacts with PCNP. Interacts with HDAC1. Interacts directly with CCNE1; the interaction ubiquitinates CCNE1 and appears independent of CCNE1 phosphorylation. Interacts with CCND1; the interaction ubiquitinates CCND1 and appears independent of CCND1 phosphorylation. Interacts with p53/TP53 and RB1. Interacts with UBE2I. Interacts with ZNF618. Interacts with UHRF1. Interacts with FANCD2. Interacts with ATR. Interacts with PCNA. May be autoubiquitinated; which may lead to proteasomal degradation. In terms of processing, phosphorylated. Phosphorylation may be mediated by CDK2. Post-translationally, autosumoylated.

The protein localises to the nucleus. The protein resides in the chromosome. The enzyme catalyses S-ubiquitinyl-[E2 ubiquitin-conjugating enzyme]-L-cysteine + [acceptor protein]-L-lysine = [E2 ubiquitin-conjugating enzyme]-L-cysteine + N(6)-ubiquitinyl-[acceptor protein]-L-lysine.. Its pathway is protein modification; protein ubiquitination. With respect to regulation, E3 ligase activity is robustly activated by 5-hydroxymethylcytosine. In terms of biological role, E3 ubiquitin ligase that plays important roles in DNA methylation, histone modifications, cell cycle and DNA repair. Acts as a specific reader for 5-hydroxymethylcytosine (5hmC) and thereby recruits various substrates to these sites to ubiquitinate them. This activity also allows the maintenance of 5mC levels at specific genomic loci and regulates neuron-related gene expression. Participates in cell cycle regulation by ubiquitinating cyclins CCND1 and CCNE1 and thereby inducing G1 arrest. Also ubiquitinates PCNP leading to its degradation by the proteasome. Plays an active role in DNA damage repair by ubiquitinating p21/CDKN1A leading to its proteasomal degradation. Also promotes DNA repair by acting as an interstrand cross-links (ICLs) sensor. Mechanistically, cooperates with UHRF1 to ensure recruitment of FANCD2 to ICLs, leading to FANCD2 monoubiquitination and subsequent activation. Contributes to UV-induced DNA damage response by physically interacting with ATR in response to irradiation, thereby promoting ATR activation. The chain is E3 ubiquitin-protein ligase UHRF2 (UHRF2) from Homo sapiens (Human).